A 190-amino-acid chain; its full sequence is NADH-quinone oxidoreductase subunit B (190 aa).

Cysteine 69, cysteine 70, cysteine 134, and cysteine 164 together coordinate [4Fe-4S] cluster.

It belongs to the complex I 20 kDa subunit family. NDH-1 is composed of 14 different subunits. Subunits NuoB, C, D, E, F, and G constitute the peripheral sector of the complex. The cofactor is [4Fe-4S] cluster.

It localises to the cell inner membrane. It carries out the reaction a quinone + NADH + 5 H(+)(in) = a quinol + NAD(+) + 4 H(+)(out). Its function is as follows. NDH-1 shuttles electrons from NADH, via FMN and iron-sulfur (Fe-S) centers, to quinones in the respiratory chain. Couples the redox reaction to proton translocation (for every two electrons transferred, four hydrogen ions are translocated across the cytoplasmic membrane), and thus conserves the redox energy in a proton gradient. In Hyphomonas neptunium (strain ATCC 15444), this protein is NADH-quinone oxidoreductase subunit B.